Consider the following 360-residue polypeptide: D-xylose 1-dehydrogenase [NADP(+)] (360 aa).

It belongs to the Gfo/Idh/MocA family. Homotretramer.

The enzyme catalyses D-xylofuranose + NADP(+) = D-xylono-1,4-lactone + NADPH + H(+). Its function is as follows. NADP-dependent D-xylose dehydrogenase involved in the degradation of D-xylose, a major component of hemicelluloses such as xylan. In addition to D-xylose, oxidizes D-ribose at similar kinetic constants, whereas D-glucose is oxidized with about 70-fold lower catalytic efficiency. This chain is D-xylose 1-dehydrogenase [NADP(+)] (gfo6), found in Haloarcula marismortui (strain ATCC 43049 / DSM 3752 / JCM 8966 / VKM B-1809) (Halobacterium marismortui).